A 335-amino-acid polypeptide reads, in one-letter code: DNA primase small subunit PriS (335 aa).

Catalysis depends on residues Asp96, Asp98, and Asp243.

It belongs to the eukaryotic-type primase small subunit family. As to quaternary structure, heterodimer of a small subunit (PriS) and a large subunit (PriL). It depends on Mg(2+) as a cofactor. Mn(2+) serves as cofactor.

Catalytic subunit of DNA primase, an RNA polymerase that catalyzes the synthesis of short RNA molecules used as primers for DNA polymerase during DNA replication. The small subunit contains the primase catalytic core and has DNA synthesis activity on its own. Binding to the large subunit stabilizes and modulates the activity, increasing the rate of DNA synthesis while decreasing the length of the DNA fragments, and conferring RNA synthesis capability. The DNA polymerase activity may enable DNA primase to also catalyze primer extension after primer synthesis. May also play a role in DNA repair. The polypeptide is DNA primase small subunit PriS (Archaeoglobus fulgidus (strain ATCC 49558 / DSM 4304 / JCM 9628 / NBRC 100126 / VC-16)).